A 297-amino-acid chain; its full sequence is Ribosomal RNA small subunit methyltransferase A (297 aa).

Residues Asn31, Leu33, Gly58, Glu79, Asp104, and Asn129 each coordinate S-adenosyl-L-methionine.

This sequence belongs to the class I-like SAM-binding methyltransferase superfamily. rRNA adenine N(6)-methyltransferase family. RsmA subfamily.

The protein resides in the cytoplasm. It carries out the reaction adenosine(1518)/adenosine(1519) in 16S rRNA + 4 S-adenosyl-L-methionine = N(6)-dimethyladenosine(1518)/N(6)-dimethyladenosine(1519) in 16S rRNA + 4 S-adenosyl-L-homocysteine + 4 H(+). Functionally, specifically dimethylates two adjacent adenosines (A1518 and A1519) in the loop of a conserved hairpin near the 3'-end of 16S rRNA in the 30S particle. May play a critical role in biogenesis of 30S subunits. This Pediococcus pentosaceus (strain ATCC 25745 / CCUG 21536 / LMG 10740 / 183-1w) protein is Ribosomal RNA small subunit methyltransferase A.